The chain runs to 94 residues: Co-chaperonin GroES (94 aa).

Belongs to the GroES chaperonin family. As to quaternary structure, heptamer of 7 subunits arranged in a ring. Interacts with the chaperonin GroEL.

The protein localises to the cytoplasm. In terms of biological role, together with the chaperonin GroEL, plays an essential role in assisting protein folding. The GroEL-GroES system forms a nano-cage that allows encapsulation of the non-native substrate proteins and provides a physical environment optimized to promote and accelerate protein folding. GroES binds to the apical surface of the GroEL ring, thereby capping the opening of the GroEL channel. The chain is Co-chaperonin GroES from Streptococcus pneumoniae serotype 19F (strain G54).